Reading from the N-terminus, the 100-residue chain is Small ribosomal subunit protein uS14c (100 aa).

Residues 1–10 (MARKGLIERE) are compositionally biased toward basic and acidic residues. The disordered stretch occupies residues 1 to 29 (MARKGLIEREKKRKKLEQKYHSIRGSSKK).

Belongs to the universal ribosomal protein uS14 family. As to quaternary structure, part of the 30S ribosomal subunit.

It is found in the plastid. The protein resides in the chloroplast. Functionally, binds 16S rRNA, required for the assembly of 30S particles. In Acorus calamus (Sweet flag), this protein is Small ribosomal subunit protein uS14c.